The sequence spans 155 residues: Large ribosomal subunit protein uL30 (155 aa).

Belongs to the universal ribosomal protein uL30 family. Part of the 50S ribosomal subunit.

The sequence is that of Large ribosomal subunit protein uL30 from Nanoarchaeum equitans (strain Kin4-M).